The following is a 207-amino-acid chain: Interleukin-6 (207 aa).

The first 20 residues, 1–20, serve as a signal peptide directing secretion; the sequence is MNSLSTSAFSLGLLLVMATA. Cys67 and Cys73 form a disulfide bridge. Phosphoserine is present on Ser76. A disulfide bond links Cys96 and Cys106.

This sequence belongs to the IL-6 superfamily. Component of a hexamer of two molecules each of IL6, IL6R and IL6ST; first binds to IL6R to associate with the signaling subunit IL6ST. Interacts with IL6R (via the N-terminal ectodomain); this interaction may be affected by IL6R-binding with SORL1, hence decreasing IL6 cis signaling. Interacts with SORL1 (via the N-terminal ectodomain); this interaction leads to IL6 internalization and lysosomal degradation. May form a trimeric complex with the soluble SORL1 ectodomain and soluble IL6R receptor; this interaction might stabilize circulating IL6, hence promoting IL6 trans signaling.

Its subcellular location is the secreted. Its function is as follows. Cytokine with a wide variety of biological functions in immunity, tissue regeneration, and metabolism. Binds to IL6R, then the complex associates to the signaling subunit IL6ST/gp130 to trigger the intracellular IL6-signaling pathway. The interaction with the membrane-bound IL6R and IL6ST stimulates 'classic signaling', whereas the binding of IL6 and soluble IL6R to IL6ST stimulates 'trans-signaling'. Alternatively, 'cluster signaling' occurs when membrane-bound IL6:IL6R complexes on transmitter cells activate IL6ST receptors on neighboring receiver cells. In terms of biological role, IL6 is a potent inducer of the acute phase response. Rapid production of IL6 contributes to host defense during infection and tissue injury, but excessive IL6 synthesis is involved in disease pathology. In the innate immune response, is synthesized by myeloid cells, such as macrophages and dendritic cells, upon recognition of pathogens through toll-like receptors (TLRs) at the site of infection or tissue injury. In the adaptive immune response, is required for the differentiation of B cells into immunoglobulin-secreting cells. Plays a major role in the differentiation of CD4(+) T cell subsets. Essential factor for the development of T follicular helper (Tfh) cells that are required for the induction of germinal-center formation. Required to drive naive CD4(+) T cells to the Th17 lineage. Also required for proliferation of myeloma cells and the survival of plasmablast cells. Acts as an essential factor in bone homeostasis and on vessels directly or indirectly by induction of VEGF, resulting in increased angiogenesis activity and vascular permeability. Induces, through 'trans-signaling' and synergistically with IL1B and TNF, the production of VEGF. Involved in metabolic controls, is discharged into the bloodstream after muscle contraction increasing lipolysis and improving insulin resistance. 'Trans-signaling' in central nervous system also regulates energy and glucose homeostasis. Mediates, through GLP-1, crosstalk between insulin-sensitive tissues, intestinal L cells and pancreatic islets to adapt to changes in insulin demand. Also acts as a myokine. Plays a protective role during liver injury, being required for maintenance of tissue regeneration. Also has a pivotal role in iron metabolism by regulating HAMP/hepcidin expression upon inflammation or bacterial infection. Through activation of IL6ST-YAP-NOTCH pathway, induces inflammation-induced epithelial regeneration. The sequence is that of Interleukin-6 (IL6) from Canis lupus familiaris (Dog).